We begin with the raw amino-acid sequence, 682 residues long: Zinc finger protein 16 (682 aa).

Basic and acidic residues predominate over residues 1–10 (MPSLRTRREE). Residues 1–43 (MPSLRTRREEAEMELSVPGPSPWTPAAQARVRDAPAVTHPGSA) are disordered. A necessary for transcription activation region spans residues 62–210 (YQQPDCDTRT…GVPTAESPLI (149 aa)). The segment at 209-231 (LICNECGKTFQGNPDLIQRQIVH) adopts a C2H2-type 1; degenerate zinc-finger fold. The segment at 237-259 (FMCDDCGKTFSQNSVLKNRHRSH) adopts a C2H2-type 2; degenerate zinc-finger fold. Lys253 participates in a covalent cross-link: Glycyl lysine isopeptide (Lys-Gly) (interchain with G-Cter in SUMO2). 8 consecutive C2H2-type zinc fingers follow at residues 265–287 (YQCS…QSHH), 293–315 (YMCN…QKSH), 321–343 (YECN…QRIH), 349–371 (YVCS…HRTH), 377–399 (FECG…QRVH), 405–427 (YECN…HRVH), 433–455 (YKCS…RRIH), and 461–483 (HVCN…QIIH). 2 required for nuclear localization regions span residues 268–393 (SECG…AHLR) and 341–373 (RIHS…THTG). Positions 473-503 (SSVLRKHQIIHTGEKPYRCSVCGKAFSHSSA) are required for nuclear localization. At Lys487 the chain carries N6-acetyllysine. 7 C2H2-type zinc fingers span residues 489–511 (YRCS…QGVH), 517–539 (YACH…QRVH), 545–567 (YECT…QRIH), 573–595 (HECN…QKVH), 601–623 (YTCV…QIIH), 629–651 (YKCS…QRIH), and 657–679 (YDCA…QLIH).

The protein belongs to the krueppel C2H2-type zinc-finger protein family. Interacts with INCA1; the interaction inhibits INCA1 activity and induces the cell cycle process. As to expression, ubiquitous.

It is found in the nucleus. Acts as a transcriptional activator. Promotes cell proliferation by facilitating the cell cycle phase transition from the S to G2/M phase. Involved in both the hemin- and phorbol myristate acetate (PMA)-induced erythroid and megakaryocytic differentiation, respectively. Also plays a role as an inhibitor of cell apoptosis. In Homo sapiens (Human), this protein is Zinc finger protein 16 (ZNF16).